The sequence spans 330 residues: Protein FAM170A (330 aa).

Disordered regions lie at residues 1–54, 76–104, and 169–218; these read MKRR…VTST, HRDSPQPQSPLAQVQERGETPPRSQHVSL, and VGTP…AKTP. The segment covering 174-185 has biased composition (polar residues); sequence SDVSTRNLLSDS. The span at 189–200 shows a compositional bias: basic and acidic residues; it reads GEEKEHEERTES. Thr217 is modified (phosphothreonine). A C2H2-type; degenerate zinc finger spans residues 228–252; that stretch reads FRCMACCRVFTTMEALQEHVQFGIR. The interval 270–330 is disordered; the sequence is NMESESTQDE…VFHSPKDRNS (61 aa). The span at 275–293 shows a compositional bias: acidic residues; that stretch reads STQDEQEEENGNEKEEEEK. Residue Ser315 is modified to Phosphoserine.

It belongs to the FAM170 family. In terms of tissue distribution, expressed strongly in testis and brain and weakly in prostate, spleen, pancreas and uterus.

It localises to the nucleus. Acts as a nuclear transcription factor that positively regulates the expression of heat shock genes. Binds to heat shock promoter elements (HSE). This chain is Protein FAM170A (FAM170A), found in Homo sapiens (Human).